We begin with the raw amino-acid sequence, 196 residues long: 3-isopropylmalate dehydratase small subunit (196 aa).

It belongs to the LeuD family. LeuD type 1 subfamily. In terms of assembly, heterodimer of LeuC and LeuD.

The enzyme catalyses (2R,3S)-3-isopropylmalate = (2S)-2-isopropylmalate. It functions in the pathway amino-acid biosynthesis; L-leucine biosynthesis; L-leucine from 3-methyl-2-oxobutanoate: step 2/4. Catalyzes the isomerization between 2-isopropylmalate and 3-isopropylmalate, via the formation of 2-isopropylmaleate. The sequence is that of 3-isopropylmalate dehydratase small subunit from Streptococcus sanguinis (strain SK36).